Consider the following 46-residue polypeptide: Protein YmiA (46 aa).

Residues 22–42 (AWLAVFLGSALFWVVVALLIW) traverse the membrane as a helical segment.

It localises to the cell inner membrane. The polypeptide is Protein YmiA (ymiA) (Escherichia coli (strain K12)).